The following is a 259-amino-acid chain: Gem-associated protein 2 (259 aa).

It belongs to the gemin-2 family. Forms a stable heteromeric complex with survival of motor neuron protein (SMN), GEMIN3 and GEMIN4. The SMN complex is associated with the spliceosomal snRNAs U1 and U5 in the cytoplasm of oocytes.

It is found in the nucleus. The protein localises to the gem. Its subcellular location is the cytoplasm. The SMN complex catalyzes the assembly of small nuclear ribonucleoproteins (snRNPs), the building blocks of the spliceosome, and thereby plays an important role in the splicing of cellular pre-mRNAs. Most spliceosomal snRNPs contain a common set of Sm proteins SNRPB, SNRPD1, SNRPD2, SNRPD3, SNRPE, SNRPF and SNRPG that assemble in a heptameric protein ring on the Sm site of the small nuclear RNA to form the core snRNP (Sm core). In the cytosol, the Sm proteins SNRPD1, SNRPD2, SNRPE, SNRPF and SNRPG (5Sm) are trapped in an inactive 6S pICln-Sm complex by the chaperone CLNS1A that controls the assembly of the core snRNP. To assemble core snRNPs, the SMN complex accepts the trapped 5Sm proteins from CLNS1A. Binding of snRNA inside 5Sm ultimately triggers eviction of the SMN complex, thereby allowing binding of SNRPD3 and SNRPB to complete assembly of the core snRNP. Within the SMN complex, GEMIN2 constrains the conformation of 5Sm, thereby promoting 5Sm binding to snRNA containing the snRNP code (a nonameric Sm site and a 3'-adjacent stem-loop), thus preventing progression of assembly until a cognate substrate is bound. This is Gem-associated protein 2 (gemin2) from Xenopus laevis (African clawed frog).